The primary structure comprises 174 residues: Secreted cysteine-rich protein UMAG_00792 (174 aa).

Residues 1-26 (MVSFKSSSLFLHSLSALLVLTTLSSA) form the signal peptide. The N-linked (GlcNAc...) asparagine glycan is linked to asparagine 77.

As to quaternary structure, secreted cysteine-rich proteins (SCRPs) are predicted to form amyloids.

It is found in the secreted. In terms of biological role, secreted cysteine-rich protein that might form amyloid strutures which are involved in attachment to hydrophobic surfaces and in formation of hydrophobic aerial hyphae. The protein is Secreted cysteine-rich protein UMAG_00792 of Mycosarcoma maydis (Corn smut fungus).